Consider the following 375-residue polypeptide: Carbamoyl phosphate synthase small chain (375 aa).

The CPSase stretch occupies residues 1 to 186; the sequence is MKAILALEDG…IVDGTYAWPG (186 aa). L-glutamine contacts are provided by Ser-45, Gly-238, and Gly-240. Residues 190 to 375 enclose the Glutamine amidotransferase type-1 domain; the sequence is RLVVFDMGIK…RNLVRKETGK (186 aa). Catalysis depends on Cys-265, which acts as the Nucleophile. Residues Leu-266, Gln-269, Asn-307, Gly-309, and Phe-310 each contribute to the L-glutamine site. Catalysis depends on residues His-348 and Glu-350.

The protein belongs to the CarA family. As to quaternary structure, composed of two chains; the small (or glutamine) chain promotes the hydrolysis of glutamine to ammonia, which is used by the large (or ammonia) chain to synthesize carbamoyl phosphate. Tetramer of heterodimers (alpha,beta)4.

The enzyme catalyses hydrogencarbonate + L-glutamine + 2 ATP + H2O = carbamoyl phosphate + L-glutamate + 2 ADP + phosphate + 2 H(+). It catalyses the reaction L-glutamine + H2O = L-glutamate + NH4(+). Its pathway is amino-acid biosynthesis; L-arginine biosynthesis; carbamoyl phosphate from bicarbonate: step 1/1. It participates in pyrimidine metabolism; UMP biosynthesis via de novo pathway; (S)-dihydroorotate from bicarbonate: step 1/3. Small subunit of the glutamine-dependent carbamoyl phosphate synthetase (CPSase). CPSase catalyzes the formation of carbamoyl phosphate from the ammonia moiety of glutamine, carbonate, and phosphate donated by ATP, constituting the first step of 2 biosynthetic pathways, one leading to arginine and/or urea and the other to pyrimidine nucleotides. The small subunit (glutamine amidotransferase) binds and cleaves glutamine to supply the large subunit with the substrate ammonia. The protein is Carbamoyl phosphate synthase small chain of Solidesulfovibrio magneticus (strain ATCC 700980 / DSM 13731 / RS-1) (Desulfovibrio magneticus).